We begin with the raw amino-acid sequence, 278 residues long: Probable septum site-determining protein MinC (278 aa).

Belongs to the MinC family. As to quaternary structure, interacts with MinD and FtsZ.

Functionally, cell division inhibitor that blocks the formation of polar Z ring septums. Rapidly oscillates between the poles of the cell to destabilize FtsZ filaments that have formed before they mature into polar Z rings. Prevents FtsZ polymerization. The protein is Probable septum site-determining protein MinC of Gloeobacter violaceus (strain ATCC 29082 / PCC 7421).